The sequence spans 122 residues: Small ribosomal subunit protein uS13 (122 aa).

Residues 93 to 122 (RRGLPVRGQRTKTNARTRKGPKKTIAGKKK) are disordered.

The protein belongs to the universal ribosomal protein uS13 family. As to quaternary structure, part of the 30S ribosomal subunit. Forms a loose heterodimer with protein S19. Forms two bridges to the 50S subunit in the 70S ribosome.

Functionally, located at the top of the head of the 30S subunit, it contacts several helices of the 16S rRNA. In the 70S ribosome it contacts the 23S rRNA (bridge B1a) and protein L5 of the 50S subunit (bridge B1b), connecting the 2 subunits; these bridges are implicated in subunit movement. Contacts the tRNAs in the A and P-sites. This chain is Small ribosomal subunit protein uS13, found in Corynebacterium efficiens (strain DSM 44549 / YS-314 / AJ 12310 / JCM 11189 / NBRC 100395).